Reading from the N-terminus, the 281-residue chain is Diaminopimelate epimerase (281 aa).

The substrate site is built by asparagine 14 and asparagine 65. Cysteine 74 serves as the catalytic Proton donor. Residues 75–76, asparagine 165, asparagine 198, and 216–217 contribute to the substrate site; these read GN and ER. Catalysis depends on cysteine 225, which acts as the Proton acceptor. 226–227 is a binding site for substrate; the sequence is GT.

The protein belongs to the diaminopimelate epimerase family. As to quaternary structure, homodimer.

It is found in the cytoplasm. It carries out the reaction (2S,6S)-2,6-diaminopimelate = meso-2,6-diaminopimelate. It functions in the pathway amino-acid biosynthesis; L-lysine biosynthesis via DAP pathway; DL-2,6-diaminopimelate from LL-2,6-diaminopimelate: step 1/1. In terms of biological role, catalyzes the stereoinversion of LL-2,6-diaminopimelate (L,L-DAP) to meso-diaminopimelate (meso-DAP), a precursor of L-lysine and an essential component of the bacterial peptidoglycan. This chain is Diaminopimelate epimerase, found in Leptospira borgpetersenii serovar Hardjo-bovis (strain JB197).